Consider the following 439-residue polypeptide: Enolase (439 aa).

2 residues coordinate substrate: histidine 157 and glutamate 166. The active-site Proton donor is the glutamate 209. Mg(2+) contacts are provided by aspartate 244, glutamate 297, and aspartate 324. Glutamate 297 and aspartate 324 together coordinate substrate. Lysine 349 serves as the catalytic Proton acceptor. Substrate contacts are provided by residues serine 376 to serine 379 and lysine 400.

Belongs to the enolase family. As to quaternary structure, homodimer. Mg(2+) serves as cofactor.

The protein resides in the cytoplasm. The enzyme catalyses (2R)-2-phosphoglycerate = phosphoenolpyruvate + H2O. It functions in the pathway carbohydrate degradation; glycolysis; pyruvate from D-glyceraldehyde 3-phosphate: step 4/5. This is Enolase (ENOL) from Mastigamoeba balamuthi (Phreatamoeba balamuthi).